The following is a 241-amino-acid chain: Probable histone-lysine N-methyltransferase set-23 (241 aa).

Residues 25–85 enclose the Pre-SET domain; that stretch reads QGCDCETQCS…SCRNKVVQNG (61 aa). Positions 27, 29, 33, 39, 41, 64, 68, 70, and 77 each coordinate Zn(2+). The SET domain occupies 88–210; sequence KKLKIFSTSE…VGEELSYDYG (123 aa). S-adenosyl-L-methionine is bound by residues 98–100, Asp138, Tyr140, Arg167, and 170–171; these read KGD and NH. Zn(2+) contacts are provided by Cys173, Cys222, Cys224, and Cys229. A Post-SET domain is found at 218–234; that stretch reads NRKLCLCRSENCRKYLP.

The protein belongs to the class V-like SAM-binding methyltransferase superfamily. Histone-lysine methyltransferase family. Suvar3-9 subfamily.

The protein localises to the nucleus. Its subcellular location is the chromosome. It catalyses the reaction L-lysyl-[histone] + S-adenosyl-L-methionine = N(6)-methyl-L-lysyl-[histone] + S-adenosyl-L-homocysteine + H(+). Functionally, probable histone methyltransferase required for embryonic development. The sequence is that of Probable histone-lysine N-methyltransferase set-23 from Caenorhabditis briggsae.